A 102-amino-acid chain; its full sequence is Small ribosomal subunit protein uS10 (102 aa).

The protein belongs to the universal ribosomal protein uS10 family. Part of the 30S ribosomal subunit.

Its function is as follows. Involved in the binding of tRNA to the ribosomes. The polypeptide is Small ribosomal subunit protein uS10 (Methanococcus maripaludis (strain C5 / ATCC BAA-1333)).